Here is a 35-residue protein sequence, read N- to C-terminus: Photosystem I reaction center subunit Z (35 aa).

Residues 10–30 traverse the membrane as a helical segment; it reads LVIITTLVVPFMAAAALLFII.

As to quaternary structure, the G.violaceus PSI reaction center is composed of one copy each of PsaA,B,C,D,E,F,L,M and Z, and forms trimeric complexes.

The protein localises to the cell inner membrane. In Gloeobacter violaceus (strain ATCC 29082 / PCC 7421), this protein is Photosystem I reaction center subunit Z (psaZ).